The following is a 502-amino-acid chain: RNA-splicing ligase RtcB homolog 2 (502 aa).

Asp-120, Cys-123, His-228, His-260, and His-354 together coordinate Mn(2+). Position 227–231 (227–231 (NHYAE)) interacts with GMP. GMP is bound by residues 354 to 355 (HN), 403 to 406 (GGSM), Ser-410, and 429 to 432 (HGAG). The active-site GMP-histidine intermediate is the His-429.

This sequence belongs to the RtcB family. In terms of assembly, catalytic component of the tRNA-splicing ligase complex. Requires Mn(2+) as cofactor.

The enzyme catalyses a 3'-end 3'-phospho-ribonucleotide-RNA + a 5'-end dephospho-ribonucleoside-RNA + GTP = a ribonucleotidyl-ribonucleotide-RNA + GMP + diphosphate. It carries out the reaction a 3'-end 2',3'-cyclophospho-ribonucleotide-RNA + a 5'-end dephospho-ribonucleoside-RNA + GTP + H2O = a ribonucleotidyl-ribonucleotide-RNA + GMP + diphosphate + H(+). Catalytic subunit of the tRNA-splicing ligase complex that acts by directly joining spliced tRNA halves to mature-sized tRNAs by incorporating the precursor-derived splice junction phosphate into the mature tRNA as a canonical 3',5'-phosphodiester. May act as an RNA ligase with broad substrate specificity, and may function toward other RNAs. In Culex quinquefasciatus (Southern house mosquito), this protein is RNA-splicing ligase RtcB homolog 2.